Here is a 142-residue protein sequence, read N- to C-terminus: Large ribosomal subunit protein uL13 (142 aa).

It belongs to the universal ribosomal protein uL13 family. In terms of assembly, part of the 50S ribosomal subunit.

This protein is one of the early assembly proteins of the 50S ribosomal subunit, although it is not seen to bind rRNA by itself. It is important during the early stages of 50S assembly. This chain is Large ribosomal subunit protein uL13, found in Shewanella frigidimarina (strain NCIMB 400).